A 325-amino-acid chain; its full sequence is Heme A synthase (325 aa).

5 consecutive transmembrane segments (helical) span residues 6 to 26 (WLAVCILLILSMVSIGGFTRL), 88 to 108 (LVGRILGLVFFIGLVYFFVVG), 116 to 136 (LRLCFALVLGVIQGFVGWYMV), 155 to 175 (LFCASLLFMVLVYEFLSPTVI), and 184 to 204 (LVGCSLMFLLSMQIILGGLVA). His246 serves as a coordination point for heme. 3 consecutive transmembrane segments (helical) span residues 248-268 (MSAFLLTFICLVCLVISFFYD), 275-295 (VFLVASMMLLQMFFGVLTLLF), and 297-317 (IPIDIALLHQIMAFILLGICV). A heme-binding site is contributed by His305.

Belongs to the COX15/CtaA family. Type 2 subfamily. In terms of assembly, interacts with CtaB. It depends on heme b as a cofactor.

It is found in the cell membrane. The enzyme catalyses Fe(II)-heme o + 2 A + H2O = Fe(II)-heme a + 2 AH2. It functions in the pathway porphyrin-containing compound metabolism; heme A biosynthesis; heme A from heme O: step 1/1. Its function is as follows. Catalyzes the conversion of heme O to heme A by two successive hydroxylations of the methyl group at C8. The first hydroxylation forms heme I, the second hydroxylation results in an unstable dihydroxymethyl group, which spontaneously dehydrates, resulting in the formyl group of heme A. The protein is Heme A synthase of Neorickettsia sennetsu (strain ATCC VR-367 / Miyayama) (Ehrlichia sennetsu).